A 325-amino-acid polypeptide reads, in one-letter code: MSKRIYSRIAGTGSYLPEKVLTNDDMSKIVDTSDEWIFSRTGIRERHIVADDQTTSDLAYFASLKAMEAAGVTAEEIDLIVIGTTTPDLIFPSTACLLQARLGNVGCGAMDVNAACSGFVYALSVADKFVRSGDAKTVLVVGAETLTRIVDWTDRTTCVLFGDGAGAVILKADEETGILSTHLHADGSKKELLWDPVGVSVGFGEGKNGGGALLMKGNDVFKYAVKALDSVVDETLAANGYDKHDLDWLIPHQANLRIIEATAKRLELPMEQVVVTVDRHGNTSSASVPLALDEAVRSGRVQRGQLLLLEAFGGGFTWGSALLRY.

Active-site residues include cysteine 116 and histidine 252. Residues 253-257 (QANLR) are ACP-binding. Residue asparagine 282 is part of the active site.

It belongs to the thiolase-like superfamily. FabH family. In terms of assembly, homodimer.

It localises to the cytoplasm. The catalysed reaction is malonyl-[ACP] + acetyl-CoA + H(+) = 3-oxobutanoyl-[ACP] + CO2 + CoA. The protein operates within lipid metabolism; fatty acid biosynthesis. Functionally, catalyzes the condensation reaction of fatty acid synthesis by the addition to an acyl acceptor of two carbons from malonyl-ACP. Catalyzes the first condensation reaction which initiates fatty acid synthesis and may therefore play a role in governing the total rate of fatty acid production. Possesses both acetoacetyl-ACP synthase and acetyl transacylase activities. Its substrate specificity determines the biosynthesis of branched-chain and/or straight-chain of fatty acids. This is Beta-ketoacyl-[acyl-carrier-protein] synthase III from Xanthomonas euvesicatoria pv. vesicatoria (strain 85-10) (Xanthomonas campestris pv. vesicatoria).